Reading from the N-terminus, the 482-residue chain is Histone deacetylase 1 (482 aa).

The interval 9 to 321 is histone deacetylase; that stretch reads RKVCYYYDGD…WTYETAVALD (313 aa). 2 residues coordinate 1D-myo-inositol 1,4,5,6-tetrakisphosphate: Gly27 and Lys31. Lys74 carries the N6-acetyllysine; alternate modification. A Glycyl lysine isopeptide (Lys-Gly) (interchain with G-Cter in SUMO2); alternate cross-link involves residue Lys74. His141 is an active-site residue. Zn(2+)-binding residues include Asp176 and His178. Lys220 bears the N6-acetyllysine mark. Position 261 is an S-nitrosocysteine (Cys261). Zn(2+) is bound at residue Asp264. 1D-myo-inositol 1,4,5,6-tetrakisphosphate is bound at residue Arg270. Cys273 is modified (S-nitrosocysteine). The span at 390-400 shows a compositional bias: acidic residues; it reads PEESGDEDEED. The segment at 390–482 is disordered; the sequence is PEESGDEDEE…KGVKEEVKMA (93 aa). A phosphoserine mark is found at Ser393, Ser406, Ser409, Ser421, and Ser423. The span at 401–416 shows a compositional bias: basic and acidic residues; it reads PDKRISICSSDKRIAC. Acidic residues predominate over residues 417 to 427; that stretch reads EEEFSDSDEEG. Residue Lys432 is modified to N6-methylated lysine; by EHMT2. Residue Lys438 forms a Glycyl lysine isopeptide (Lys-Gly) (interchain with G-Cter in SUMO2) linkage. A compositionally biased stretch (basic and acidic residues) spans 443 to 482; that stretch reads VKTEDEKEKDPEEKKEVTEEEKTKEEKPEAKGVKEEVKMA. Lys444 participates in a covalent cross-link: Glycyl lysine isopeptide (Lys-Gly) (interchain with G-Cter in SUMO2); alternate. Lys444 is covalently cross-linked (Glycyl lysine isopeptide (Lys-Gly) (interchain with G-Cter in SUMO); alternate). Glycyl lysine isopeptide (Lys-Gly) (interchain with G-Cter in SUMO2) cross-links involve residues Lys456, Lys457, and Lys473. Residue Lys476 forms a Glycyl lysine isopeptide (Lys-Gly) (interchain with G-Cter in SUMO2); alternate linkage. A Glycyl lysine isopeptide (Lys-Gly) (interchain with G-Cter in SUMO); alternate cross-link involves residue Lys476. Lys480 participates in a covalent cross-link: Glycyl lysine isopeptide (Lys-Gly) (interchain with G-Cter in SUMO2).

Belongs to the histone deacetylase family. HD type 1 subfamily. In terms of assembly, part of the core histone deacetylase (HDAC) complex composed of HDAC1, HDAC2, RBBP4 and RBBP7, the core complex associates with SIN3, SAP18 and SAP30 to form the SIN3 HDAC complex. Component of the nucleosome remodeling and deacetylase (NuRD) repressor complex, composed of core proteins MTA1, MTA2, MTA3, RBBP4, RBBP7, HDAC1, HDAC2, MBD2, MBD3, and peripherally associated proteins CDK2AP1, CDK2AP2, GATAD2A, GATAD2B, CHD3, CHD4 and CHD5. The exact stoichiometry of the NuRD complex is unknown, and some subunits such as MBD2 and MBD3, GATAD2A and GATAD2B, and CHD3, CHD4 and CHD5 define mutually exclusive NuRD complexes. Component of a BHC histone deacetylase complex that contains HDAC1, HDAC2, HMG20B/BRAF35, KDM1A, RCOR1/CoREST and PHF21A/BHC80. The BHC complex may also contain ZMYM2, ZNF217, ZMYM3, GSE1 and GTF2I. Component of a mSin3A corepressor complex that contains SIN3A, SAP130, SUDS3/SAP45, ARID4B/SAP180, HDAC1 and HDAC2. Found in a trimeric complex with APBB1 and TSHZ3; the interaction between HDAC1 and APBB1 is mediated by TSHZ3. Forms a complex comprising APPL1, RUVBL2, APPL2, CTNNB1 and HDAC2. Component of a RCOR/GFI/KDM1A/HDAC complex. Part of a complex composed of TRIM28, HDAC1, HDAC2 and EHMT2. Part of a complex containing at least CDYL, MIER1, MIER2, HDAC1 and HDAC2. The large PER complex involved in the histone deacetylation is composed of at least HDAC1, PER2, SFPQ and SIN3A. Associates with the 9-1-1 complex; interacts with HUS1. Found in a complex with DNMT3A and HDAC7. Found in a complex with YY1, SIN3A and GON4L. Identified in a histone deacetylase complex that contains DNTTIP1, HDAC1 and MIDEAS; this complex assembles into a tetramer that contains four copies of each protein chain. Found in a complex composed of at least SINHCAF, SIN3A, HDAC1, SAP30, RBBP4, OGT and TET1. Component of the SIN3B complex, which includes SIN3B, HDAC1, PHF12 and MORF4L1. Interacts with GFI1; the interaction is direct. Interacts directly with GFI1B. Interacts with TSHZ3 (via N-terminus); the interaction is direct. Interacts with APEX1; the interaction is not dependent on the acetylated status of APEX1. Interacts with BANP. Interacts with BAZ2A/TIP5. Interacts with BCL6. Interacts with BCOR. Interacts with BHLHE40/DEC1. Interacts with BRCC3; this interaction is enhanced in the presence of PWWP2B. Interacts with BRMS1. Interacts with BRMS1L. Interacts with C10orf90/FATS (via its N-terminal); the interaction prevents binding of HDAC1 to CDKN1A/p21 and facilitates the acetylation and stabilization of CDKN1A/p21. Interacts with CBFA2T3. Interacts with CCAR2. Interacts with CDK2AP1. Interacts with CHD3. Interacts with CHD4. Interacts with CHFR. Interacts with CIART. Interacts with CDKN1A/p21. Interacts with CDK5 complexed to CDK5R1 (p25). Interacts with CRY1. Interacts with DAXX. Interacts with DDIT3/CHOP. Interacts with DDX5. Interacts with DHX36; this interaction occurs in a RNA-dependent manner. Interacts with DNMT1. Interacts with DNTTIP1. Interacts with E4F1. Interacts with EP300. Interacts with ERCC6. Interacts with GATAD2A. Interacts with HCFC1. Interacts with HDAC9. Interacts with HUS1. Interacts with INSM1. Interacts with KDM4A. Interacts with KDM5A; this interaction impairs histone deacetylation. Interacts with KDM5B. Interacts with KLF1. Interacts with MBD3L2. Interacts with MIER1. Interacts with NFE4. Interacts with NR4A2/NURR1. Interacts with NR1D2 (via C-terminus). Interacts with NRIP1. Interacts with NSD2. Interacts with PACS2. Interacts with PHB2. Interacts with PPHLN1. Interacts with PRDM6. Interacts with PRDM16. Interacts with PWWP2A in a MTA1-dependent manner. Interacts with PWWP2B. Interacts with RB1. Interacts with RERE. Interacts with SANBR (via the BTB domain). Interacts with SAMSN1. Interacts with SAP30L. Interacts with SETDB1. Interacts with SIN3A. Interacts with SMAD3. Interacts with SMAD4; positively regulated by ZBTB7A. Interacts with SMARCAD1. Interacts with SMARCA4/BRG1. Interacts with SMYD2. Interacts with SMYD4 (via MYND-type zinc finger). Interacts with SP1; the interaction deacetylates SP1 and regulates its transcriptional activity. Interacts with SP3; the interaction deacetylates SP3 and regulates its transcriptional activity. In vitro, C(18) ceramides increase this interaction and the subsequent SP3 deacetylation and SP3-mediated repression of the TERT promoter. Interacts with SPEN/MINT. Interacts with SPHK2. Interacts with SUV39H1. Interacts with TGIF. Interacts with TGIF2. Interacts with TRAF6. Interacts with TRIM28; the interaction recruits HDAC1 to E2F1 and inhibits its acetylation. Interacts with TSC22D3 isoform 1; this interaction affects HDAC1 activity on MYOG promoter and thus inhibits MYOD1 transcriptional activity. Interacts with UHRF1. Interacts with UHRF2. Interacts with ZBTB7A. Interacts with ZMYND8. Interacts with ZMYND15. Interacts with ZNF431. Interacts with ZNF516; this interaction is enhanced in the presence of PWWP2B. Interacts with ZNF541. Interacts with ZNF638. Interacts with ZNHIT1. Interacts with the non-histone region of MACROH2A1. Identified in a complex with HDAC2, KCTD19, DNTTIP1 and ZNF541. Interacts with MSX3. Interacts with VRK1. It depends on Zn(2+) as a cofactor. Sumoylated on Lys-444 and Lys-476; which promotes enzymatic activity. Desumoylated by SENP1. In terms of processing, phosphorylation on Ser-421 and Ser-423 promotes enzymatic activity and interactions with NuRD and SIN3 complexes. Phosphorylated by CDK5. Post-translationally, ubiquitinated by CHFR and KCTD11, leading to its degradation by the proteasome.

The protein resides in the nucleus. It carries out the reaction N(6)-acetyl-L-lysyl-[histone] + H2O = L-lysyl-[histone] + acetate. It catalyses the reaction N(6)-acetyl-L-lysyl-[protein] + H2O = L-lysyl-[protein] + acetate. The catalysed reaction is N(6)-(2E)-butenoyl-L-lysyl-[protein] + H2O = (2E)-2-butenoate + L-lysyl-[protein]. The enzyme catalyses N(6)-[(S)-lactoyl]-L-lysyl-[protein] + H2O = (S)-lactate + L-lysyl-[protein]. Its activity is regulated as follows. Inositol tetraphosphate (1D-myo-inositol 1,4,5,6-tetrakisphosphate) may act as an intermolecular glue between HDAC1 and N-Cor repressor complex components. Histone deacetylase that catalyzes the deacetylation of lysine residues on the N-terminal part of the core histones (H2A, H2B, H3 and H4). Histone deacetylation gives a tag for epigenetic repression and plays an important role in transcriptional regulation, cell cycle progression and developmental events. Histone deacetylases act via the formation of large multiprotein complexes. Acts as a component of the histone deacetylase NuRD complex which participates in the remodeling of chromatin. As part of the SIN3B complex is recruited downstream of the constitutively active genes transcriptional start sites through interaction with histones and mitigates histone acetylation and RNA polymerase II progression within transcribed regions contributing to the regulation of transcription. Also functions as a deacetylase for non-histone targets, such as NR1D2, RELA, SP1, SP3, STAT3 and TSHZ3. Deacetylates SP proteins, SP1 and SP3, and regulates their function. Component of the BRG1-RB1-HDAC1 complex, which negatively regulates the CREST-mediated transcription in resting neurons. Upon calcium stimulation, HDAC1 is released from the complex and CREBBP is recruited, which facilitates transcriptional activation. Deacetylates TSHZ3 and regulates its transcriptional repressor activity. Deacetylates 'Lys-310' in RELA and thereby inhibits the transcriptional activity of NF-kappa-B. Deacetylates NR1D2 and abrogates the effect of KAT5-mediated relieving of NR1D2 transcription repression activity. Component of a RCOR/GFI/KDM1A/HDAC complex that suppresses, via histone deacetylase (HDAC) recruitment, a number of genes implicated in multilineage blood cell development. Involved in CIART-mediated transcriptional repression of the circadian transcriptional activator: CLOCK-BMAL1 heterodimer. Required for the transcriptional repression of circadian target genes, such as PER1, mediated by the large PER complex or CRY1 through histone deacetylation. In addition to protein deacetylase activity, also has protein-lysine deacylase activity: acts as a protein decrotonylase and delactylase by mediating decrotonylation ((2E)-butenoyl) and delactylation (lactoyl) of histones, respectively. The chain is Histone deacetylase 1 (Hdac1) from Rattus norvegicus (Rat).